The following is a 187-amino-acid chain: Large ribosomal subunit protein uL5 (187 aa).

This sequence belongs to the universal ribosomal protein uL5 family. As to quaternary structure, part of the 50S ribosomal subunit; part of the 5S rRNA/L5/L18/L25 subcomplex. Contacts the 5S rRNA and the P site tRNA. Forms a bridge to the 30S subunit in the 70S ribosome.

This is one of the proteins that bind and probably mediate the attachment of the 5S RNA into the large ribosomal subunit, where it forms part of the central protuberance. In the 70S ribosome it contacts protein S13 of the 30S subunit (bridge B1b), connecting the 2 subunits; this bridge is implicated in subunit movement. Contacts the P site tRNA; the 5S rRNA and some of its associated proteins might help stabilize positioning of ribosome-bound tRNAs. The protein is Large ribosomal subunit protein uL5 of Mycobacterium leprae (strain Br4923).